Reading from the N-terminus, the 322-residue chain is Serine protease Lpg1137 (322 aa).

Ser68 is a catalytic residue.

It is found in the secreted. It localises to the host mitochondrion membrane. Serine protease effector that inhibits host cell autophagy by targeting SNX17. Localizes to the host endoplasmic reticulum-mitochondria contact site and catalyzes degradation of host SNX17, thereby impairing endoplasmic reticulum-mitochondria communication, leading to inhibit autophagy as well as staurosporine-induced apoptosis. The sequence is that of Serine protease Lpg1137 from Legionella pneumophila subsp. pneumophila (strain Philadelphia 1 / ATCC 33152 / DSM 7513).